Consider the following 67-residue polypeptide: Large ribosomal subunit protein uL29 (67 aa).

This sequence belongs to the universal ribosomal protein uL29 family.

This is Large ribosomal subunit protein uL29 from Clostridioides difficile (strain 630) (Peptoclostridium difficile).